Reading from the N-terminus, the 141-residue chain is Large ribosomal subunit protein uL11 (141 aa).

This sequence belongs to the universal ribosomal protein uL11 family. Part of the ribosomal stalk of the 50S ribosomal subunit. Interacts with L10 and the large rRNA to form the base of the stalk. L10 forms an elongated spine to which L12 dimers bind in a sequential fashion forming a multimeric L10(L12)X complex. In terms of processing, one or more lysine residues are methylated.

In terms of biological role, forms part of the ribosomal stalk which helps the ribosome interact with GTP-bound translation factors. In Streptococcus pneumoniae (strain Hungary19A-6), this protein is Large ribosomal subunit protein uL11.